The sequence spans 871 residues: Leucine--tRNA ligase (871 aa).

The short motif at 42-52 (PYPSGSLHMGH) is the 'HIGH' region element. The 'KMSKS' region signature appears at 634-638 (TMSKS). Lysine 637 lines the ATP pocket.

It belongs to the class-I aminoacyl-tRNA synthetase family.

It localises to the cytoplasm. The catalysed reaction is tRNA(Leu) + L-leucine + ATP = L-leucyl-tRNA(Leu) + AMP + diphosphate. The chain is Leucine--tRNA ligase from Nostoc punctiforme (strain ATCC 29133 / PCC 73102).